The chain runs to 451 residues: DNA polymerase IV (451 aa).

In terms of domain architecture, UmuC spans 5–187; that stretch reads VIHVDMDAFF…LPVGRLWGVG (183 aa). Mg(2+)-binding residues include D9 and D104. E105 is a catalytic residue.

This sequence belongs to the DNA polymerase type-Y family. In terms of assembly, monomer. Mg(2+) is required as a cofactor.

It is found in the cytoplasm. The catalysed reaction is DNA(n) + a 2'-deoxyribonucleoside 5'-triphosphate = DNA(n+1) + diphosphate. Poorly processive, error-prone DNA polymerase involved in untargeted mutagenesis. Copies undamaged DNA at stalled replication forks, which arise in vivo from mismatched or misaligned primer ends. These misaligned primers can be extended by PolIV. Exhibits no 3'-5' exonuclease (proofreading) activity. May be involved in translesional synthesis, in conjunction with the beta clamp from PolIII. The polypeptide is DNA polymerase IV (Corynebacterium diphtheriae (strain ATCC 700971 / NCTC 13129 / Biotype gravis)).